A 194-amino-acid polypeptide reads, in one-letter code: 7-methyl-GTP pyrophosphatase (194 aa).

The active-site Proton acceptor is aspartate 70.

This sequence belongs to the Maf family. YceF subfamily. Requires a divalent metal cation as cofactor.

The protein localises to the cytoplasm. It catalyses the reaction N(7)-methyl-GTP + H2O = N(7)-methyl-GMP + diphosphate + H(+). Its function is as follows. Nucleoside triphosphate pyrophosphatase that hydrolyzes 7-methyl-GTP (m(7)GTP). May have a dual role in cell division arrest and in preventing the incorporation of modified nucleotides into cellular nucleic acids. The protein is 7-methyl-GTP pyrophosphatase of Ralstonia nicotianae (strain ATCC BAA-1114 / GMI1000) (Ralstonia solanacearum).